The chain runs to 105 residues: Large ribosomal subunit protein bL21c (105 aa).

Belongs to the bacterial ribosomal protein bL21 family. In terms of assembly, part of the 50S ribosomal subunit.

The protein resides in the plastid. It is found in the chloroplast. Its function is as follows. This protein binds to 23S rRNA. The chain is Large ribosomal subunit protein bL21c from Thalassiosira pseudonana (Marine diatom).